A 213-amino-acid chain; its full sequence is Bacteriochlorophyll synthase 23 kDa chain (213 aa).

It functions in the pathway porphyrin-containing compound metabolism; bacteriochlorophyll biosynthesis (light-independent). The protein is Bacteriochlorophyll synthase 23 kDa chain (bchJ) of Rhodobacter capsulatus (strain ATCC BAA-309 / NBRC 16581 / SB1003).